The primary structure comprises 433 residues: Glutamate-1-semialdehyde 2,1-aminomutase (433 aa).

Lysine 267 is subject to N6-(pyridoxal phosphate)lysine.

This sequence belongs to the class-III pyridoxal-phosphate-dependent aminotransferase family. HemL subfamily. In terms of assembly, homodimer. Requires pyridoxal 5'-phosphate as cofactor.

The protein localises to the cytoplasm. The catalysed reaction is (S)-4-amino-5-oxopentanoate = 5-aminolevulinate. It participates in porphyrin-containing compound metabolism; protoporphyrin-IX biosynthesis; 5-aminolevulinate from L-glutamyl-tRNA(Glu): step 2/2. The chain is Glutamate-1-semialdehyde 2,1-aminomutase from Syntrophobacter fumaroxidans (strain DSM 10017 / MPOB).